A 211-amino-acid polypeptide reads, in one-letter code: UPF0056 membrane protein YvbG (211 aa).

6 consecutive transmembrane segments (helical) span residues Met-1–Gly-21, Ile-47–Phe-67, Ile-69–Leu-89, Ile-114–Met-134, Met-150–Ile-170, and Leu-188–Val-208.

It belongs to the UPF0056 (MarC) family.

Its subcellular location is the cell membrane. This chain is UPF0056 membrane protein YvbG (yvbG), found in Bacillus subtilis (strain 168).